Here is a 152-residue protein sequence, read N- to C-terminus: Urease accessory protein UreE (152 aa).

The protein belongs to the UreE family.

Its subcellular location is the cytoplasm. Its function is as follows. Involved in urease metallocenter assembly. Binds nickel. Probably functions as a nickel donor during metallocenter assembly. This is Urease accessory protein UreE from Citrobacter koseri (strain ATCC BAA-895 / CDC 4225-83 / SGSC4696).